The following is a 236-amino-acid chain: Chorionic somatomammotropin hormone (236 aa).

An N-terminal signal peptide occupies residues 1–36 (MAPASSHREHQWTCNLVRGSRLLLLLVVSNLILCQG). 3 disulfide bridges follow: Cys44/Cys51, Cys97/Cys212, and Cys229/Cys234.

This sequence belongs to the somatotropin/prolactin family.

It is found in the secreted. In Ovis aries (Sheep), this protein is Chorionic somatomammotropin hormone (CSH).